The sequence spans 507 residues: MEASWLENRWARPLHLALVFCLALVLMQAVKLYLRRQRLLRDLRPFPGPTAHWLLGHQKFLQEDNMEKLDEIVKEYPCAFPCWVGPFQAFFYIYDPDYAKIFLSRTDPKTQYLHQLMTPFLGRGLLNLDGPRWFQHRCLLTPAFHQDILKPCVDMMAHSVNMMLDKWEKTWTTQETTIEVFEHINLMTLDIIMKCAFGQETNCQINGTYESYVKATFELGEIISSRLYNFWHHHDIIFKLSPKGHCFQELGKVIHQCTEKIIQDRKKTLKDQVNQDDTQTSQNFLDIVLSAQAGDEKAFSDADLRSEVNTFMWAGHDASAASISWLLYCLALNPEHQDRCRTEIRSILGDGSSITWEQLDEIPYTTMCIKETLRLIPPIPSISRELSKPLTLPDGHSLPAGMTVVLSIWGLHHNPAVWKDPKVFDPLRFTKENSEQRHPCAFLPFSSGPRNCIGQQFAMLELKVAIALTLLRFRVAADLTRPPAFSSHTVLRPKHGIYLHLKKLPEC.

The helical transmembrane segment at 14–34 threads the bilayer; it reads LHLALVFCLALVLMQAVKLYL. Position 452 (C452) interacts with heme.

It belongs to the cytochrome P450 family. Requires heme as cofactor. In terms of tissue distribution, expressed at high levels in brain, mainly in neurons in different regions, including brain stem, hippocampus, cortex and cerebellum. Also expressed in cerebral vasculature. Not detected in kidney, nor liver.

The protein resides in the endoplasmic reticulum membrane. It localises to the microsome membrane. The catalysed reaction is N-(5Z,8Z,11Z,14Z-eicosatetraenoyl)-ethanolamine + reduced [NADPH--hemoprotein reductase] + O2 = N-(14,15-epoxy-5Z,8Z,11Z-eicosatrienoyl)-ethanolamine + oxidized [NADPH--hemoprotein reductase] + H2O + H(+). Its function is as follows. A cytochrome P450 monooxygenase that selectively catalyzes the epoxidation of the last double bond of the arachidonoyl moiety of anandamide, potentially modulating endocannabinoid signaling. Has no hydroxylase activity toward various fatty acids, steroids and prostaglandins. Mechanistically, uses molecular oxygen inserting one oxygen atom into a substrate, and reducing the second into a water molecule, with two electrons provided by NADPH via cytochrome P450 reductase (CPR; NADPH-ferrihemoprotein reductase). The protein is Cytochrome P450 4X1 of Rattus norvegicus (Rat).